The following is a 152-amino-acid chain: Deoxyuridine 5'-triphosphate nucleotidohydrolase (152 aa).

Residues 70 to 72 (RSG), Asn83, 87 to 89 (LID), and Met97 contribute to the substrate site.

This sequence belongs to the dUTPase family. Mg(2+) serves as cofactor.

The enzyme catalyses dUTP + H2O = dUMP + diphosphate + H(+). It participates in pyrimidine metabolism; dUMP biosynthesis; dUMP from dCTP (dUTP route): step 2/2. Its function is as follows. This enzyme is involved in nucleotide metabolism: it produces dUMP, the immediate precursor of thymidine nucleotides and it decreases the intracellular concentration of dUTP so that uracil cannot be incorporated into DNA. This is Deoxyuridine 5'-triphosphate nucleotidohydrolase from Buchnera aphidicola subsp. Baizongia pistaciae (strain Bp).